A 228-amino-acid chain; its full sequence is Probable septum site-determining protein MinC (228 aa).

Belongs to the MinC family. In terms of assembly, interacts with MinD and FtsZ.

Functionally, cell division inhibitor that blocks the formation of polar Z ring septums. Rapidly oscillates between the poles of the cell to destabilize FtsZ filaments that have formed before they mature into polar Z rings. Prevents FtsZ polymerization. In Bacillus mycoides (strain KBAB4) (Bacillus weihenstephanensis), this protein is Probable septum site-determining protein MinC.